Consider the following 116-residue polypeptide: Vesicle-associated membrane protein 2 (116 aa).

The segment at 1 to 33 (MSATAATAPPAAPAGEGGPPAPPPNLTSNRRLQ) is disordered. Serine 2 carries the post-translational modification N-acetylserine. Residues 2–94 (SATAATAPPA…KRKYWWKNLK (93 aa)) lie on the Cytoplasmic side of the membrane. In terms of domain architecture, v-SNARE coiled-coil homology spans 31–91 (RLQQTQAQVD…AKLKRKYWWK (61 aa)). The interval 92–116 (NLKMMIILGVICAIILIIIIVYFST) is required for interaction with SEPT8. Residues 95–114 (MMIILGVICAIILIIIIVYF) traverse the membrane as a helical; Anchor for type IV membrane protein segment. Residues 115-116 (ST) are Vesicular-facing.

It belongs to the synaptobrevin family. In terms of assembly, part of the SNARE core complex containing SNAP25, VAMP2 and STX1A; this complex constitutes the basic catalytic machinery of the complex neurotransmitter release apparatus. Recruited to the SNARE complex following binding of the SNARE complex component STX1A to STXBP1. This complex binds to CPLX1. Interacts with POPDC1 and STX4. Interacts with VAPA and VAPB. Interacts with WDFY2, PRKCZ and PRKCI. Forms a complex with WDFY2 and PRKCZ. Interacts (via N-terminus) with KCNB1 (via N-terminus and C-terminus); stimulates the channel inactivation rate of KCNB1. Interacts with SEPT8; the interaction inhibits interaction of VAMP2 with SYP. Interacts with SYP; the interaction is inhibited by interaction with SEPT8. Interacts with PICALM. Interacts with alpha-synuclein/SNCA. Interacts with STX3. Post-translationally, phosphorylated by PRKCZ in vitro and this phosphorylation is increased in the presence of WDFY2. In terms of processing, (Microbial infection) Targeted and hydrolyzed by C.botulinum neurotoxin type B (BoNT/B, botB) which hydrolyzes the 76-Gln-|-Phe-77 bond and probably inhibits neurotransmitter release. (Microbial infection) Targeted and hydrolyzed by C.botulinum neurotoxin type D (BoNT/D, botD) which probably hydrolyzes the 59-Lys-|-Leu-60 bond and inhibits neurotransmitter release. Note that humans are not known to be infected by C.botulinum type D. Post-translationally, (Microbial infection) Targeted and hydrolyzed by C.botulinum neurotoxin type F (BoNT/F, botF) which hydrolyzes the 58-Gln-|-Lys-59 bond and probably inhibits neurotransmitter release. In terms of processing, (Microbial infection) Targeted and hydrolyzed by C.tetani tetanus toxin (tetX) which hydrolyzes the 76-Gln-|-Phe-77 bond and probably inhibits neurotransmitter release. As to expression, nervous system and skeletal muscle.

It is found in the cytoplasmic vesicle. The protein resides in the secretory vesicle. It localises to the synaptic vesicle membrane. The protein localises to the cell membrane. Functionally, involved in the targeting and/or fusion of transport vesicles to their target membrane. Major SNARE protein of synaptic vesicles which mediates fusion of synaptic vesicles to release neurotransmitters. Essential for fast vesicular exocytosis and activity-dependent neurotransmitter release as well as fast endocytosis that mediates rapid reuse of synaptic vesicles. Modulates the gating characteristics of the delayed rectifier voltage-dependent potassium channel KCNB1. The protein is Vesicle-associated membrane protein 2 of Homo sapiens (Human).